The following is a 176-amino-acid chain: Corrinoid adenosyltransferase (176 aa).

Residues 6–14 (TRTGDNGTT), Lys-24, 131–136 (RRLERI), and Asn-155 contribute to the ATP site.

Belongs to the Cob(I)alamin adenosyltransferase family.

The protein resides in the cytoplasm. It carries out the reaction 2 cob(II)yrinate a,c diamide + reduced [electron-transfer flavoprotein] + 2 ATP = 2 adenosylcob(III)yrinate a,c-diamide + 2 triphosphate + oxidized [electron-transfer flavoprotein] + 3 H(+). The enzyme catalyses 2 cob(II)alamin + reduced [electron-transfer flavoprotein] + 2 ATP = 2 adenosylcob(III)alamin + 2 triphosphate + oxidized [electron-transfer flavoprotein] + 3 H(+). Its pathway is cofactor biosynthesis; adenosylcobalamin biosynthesis; adenosylcobalamin from cob(II)yrinate a,c-diamide: step 2/7. This is Corrinoid adenosyltransferase from Citrobacter freundii.